An 833-amino-acid polypeptide reads, in one-letter code: Capsid-associated protein Vp91 (833 aa).

The N-terminal stretch at 1–18 is a signal peptide; it reads MSGVVLLVLAIILITIFS. Asn137, Asn180, Asn199, and Asn210 each carry an N-linked (GlcNAc...) asparagine; by host glycan. The segment at 147-196 adopts a C2HC BV-type zinc-finger fold; it reads CVPEDPCSGRPPGRYPMNELLLDTLVHNQHSDKNYSAGAHLYHPTLYLRC. Disulfide bonds link Cys207-Cys220 and Cys260-Cys273. Residues 223 to 281 form the Chitin-binding type-2 domain; it reads NELCEGRPDGFVLPYFPEALLVNEFVECRNGEHVVAQCADGQVFDRALMTCVHAHPCAF. Asn408, Asn413, Asn588, and Asn609 each carry an N-linked (GlcNAc...) asparagine; by host glycan. The interval 647 to 673 is disordered; the sequence is EPGGDGDHWAPEVPPTQPEPELEPESE.

The protein resides in the virion. Functionally, probable capsid-associated protein. The protein is Capsid-associated protein Vp91 of Choristoneura fumiferana nuclear polyhedrosis virus (CfMNPV).